The primary structure comprises 456 residues: MASCDEVRQLKKEHTRSLTMCGHVGFESLPDQLVDRSIEQGFCFNILCVGETGIGKSTLINTLFNTNFEELESSHFCPCVRLRAQTYELQESNVRLKLTIVNTVGFGDQINKEESYQPIVDYIDNQFEAYLQEELKIKRALFNYHDSRIHVCLYFIAPTGHSLRTLDLLTMKSLDNKVNIIPLIAKADTISKSELQKFKMKLMSELVINGVQIYQFPTDDDTTAKINGAMNGHLPFAVVGSMDEIKVGNKMVKARQYPWGIVQVENENHCDFVKLREMLICTNMEDLREQTHMRHYELYRRCKLQEMGFIDIGPENKPLSLQETYEAKRHEFCGERQRKEEQMKQMFVQRVKEKEAILKEAERELQAKFEHLKRIHQEERMKLEEKRRMLEEESVAFAKKKATCELFPHQSFLASGSSIRRDKDRKKTDGASAFCDCITAQENVRLCISSQRKEMD.

The Septin-type G domain occupies 40–306 (QGFCFNILCV…ELYRRCKLQE (267 aa)). The tract at residues 50–57 (GETGIGKS) is G1 motif. GTP is bound by residues 50–57 (GETGIGKS), glycine 105, 186–194 (KADTISKSE), glycine 240, and arginine 255. Positions 102–105 (NTVG) are G3 motif. Positions 185 to 188 (AKAD) are G4 motif. Position 418 is a phosphoserine (serine 418).

The protein belongs to the TRAFAC class TrmE-Era-EngA-EngB-Septin-like GTPase superfamily. Septin GTPase family. As to quaternary structure, septins polymerize into heterooligomeric protein complexes that form filaments, and can associate with cellular membranes, actin filaments and microtubules. GTPase activity is required for filament formation. Interacts with ADGB. Proteolytically cleaved in vitro in a calmodulin-dependent manner.

The protein resides in the cytoplasm. It is found in the cytoskeleton. The protein localises to the cell projection. It localises to the cilium. Its subcellular location is the flagellum. Its function is as follows. Filament-forming cytoskeletal GTPase. May play a role in cytokinesis (Potential). In Rattus norvegicus (Rat), this protein is Septin-10.